A 245-amino-acid chain; its full sequence is MSVCSSDLSYGSRVCLPGSCDSCSDSWQVDDCPESCCEPPCCAPAPCLSLVCTPVSRVSSPCCRVTCEPSPCQSGCTSSCTPSCCQQSSCQPACCTSSPCQQACCVPVCCKTVCCKPVCCMPVCCGPSSSCCQQSSCQPACCISSPCQQSCCVPVCCKPICCVPVCSGASSLCCQQSSCQPACCTTSCCRPSSSVSLLCRPVCRPARRVPVPSCCVPTSSCQPSCGRLASCGSLLCRPTCSRLAC.

A run of 19 repeats spans residues 36 to 40 (CCEPP), 41 to 45 (CCAPA), 62 to 66 (CCRVT), 84 to 88 (CCQQS), 94 to 98 (CCTSS), 104 to 108 (CCVPV), 109 to 113 (CCKTV), 114 to 118 (CCKPV), 119 to 123 (CCMPV), 124 to 128 (CCGPS), 131 to 135 (CCQQS), 141 to 145 (CCISS), 151 to 155 (CCVPV), 156 to 160 (CCKPI), 161 to 165 (CCVPV), 173 to 177 (CCQQS), 183 to 187 (CCTTS), 188 to 192 (CCRPS), and 214 to 218 (CCVPT). The tract at residues 36 to 218 (CCEPPCCAPA…VPVPSCCVPT (183 aa)) is 19 X 5 AA repeats of C-C-X(3).

The protein belongs to the KRTAP type 10 family. In terms of assembly, interacts with hair keratins. In terms of tissue distribution, restricted to a narrow region of the hair fiber cuticle, lying approximately 20 cell layers above the apex of the dermal papilla of the hair root; not detected in any other tissues.

Functionally, in the hair cortex, hair keratin intermediate filaments are embedded in an interfilamentous matrix, consisting of hair keratin-associated proteins (KRTAP), which are essential for the formation of a rigid and resistant hair shaft through their extensive disulfide bond cross-linking with abundant cysteine residues of hair keratins. The matrix proteins include the high-sulfur and high-glycine-tyrosine keratins. The sequence is that of Keratin-associated protein 10-12 (KRTAP10-12) from Homo sapiens (Human).